The primary structure comprises 289 residues: Inorganic pyrophosphatase (289 aa).

Residue serine 2 is modified to N-acetylserine. An N6-acetyllysine modification is found at lysine 57. Mg(2+) is bound by residues aspartate 116, aspartate 121, and aspartate 153. N6-acetyllysine is present on lysine 228. Serine 250 is subject to Phosphoserine.

This sequence belongs to the PPase family. In terms of assembly, homodimer. Mg(2+) serves as cofactor. In terms of tissue distribution, expressed ubiquitously.

Its subcellular location is the cytoplasm. The enzyme catalyses diphosphate + H2O = 2 phosphate + H(+). This chain is Inorganic pyrophosphatase (PPA1), found in Homo sapiens (Human).